Consider the following 320-residue polypeptide: tRNA pseudouridine synthase B (320 aa).

D41 (nucleophile) is an active-site residue. Disordered regions lie at residues 116–136 and 259–284; these read PPQVSAVHVQGERAHARARRG and DQCQPAPKPLASDQQESAPNQTDPSA. The span at 125–136 shows a compositional bias: basic and acidic residues; it reads QGERAHARARRG. Polar residues predominate over residues 270 to 284; that stretch reads SDQQESAPNQTDPSA.

This sequence belongs to the pseudouridine synthase TruB family. Type 1 subfamily.

It carries out the reaction uridine(55) in tRNA = pseudouridine(55) in tRNA. Responsible for synthesis of pseudouridine from uracil-55 in the psi GC loop of transfer RNAs. This chain is tRNA pseudouridine synthase B, found in Prochlorococcus marinus (strain MIT 9313).